A 1512-amino-acid chain; its full sequence is Bifunctional glutamate/proline--tRNA ligase (1512 aa).

The glutamate--tRNA ligase stretch occupies residues 164-759 (GTKWDVSGNR…SSVLYSRVAV (596 aa)). The short motif at 204 to 214 (PEASGYLHIGH) is the 'HIGH' region element. The segment at 294–315 (TPAEQMKAEREQRTESKHRKNS) is disordered. Residues 299–308 (MKAEREQRTE) show a composition bias toward basic and acidic residues. An N6-acetyllysine; alternate modification is found at Lys300. Position 300 is an N6-malonyllysine; alternate (Lys300). Residue Thr355 is modified to Phosphothreonine. The residue at position 417 (Lys417) is an N6-acetyllysine. The 'KMSKS' region signature appears at 432-436 (VLSKR). Ser434 is modified (phosphoserine). N6-acetyllysine occurs at positions 498, 535, 542, and 637. Over residues 709–736 (EMPTSGSKEKTKVEISKKETSSAPKERP) the composition is skewed to basic and acidic residues. A disordered region spans residues 709 to 742 (EMPTSGSKEKTKVEISKKETSSAPKERPAPAVSS). The WHEP-TRS 1 domain maps to 749–805 (DSSVLYSRVAVQGDVVRELKAKKAPKEDIDAAVKQLLTLKAEYKEKTGQEYKPGNPS). Residues 760-956 (QGDVVRELKA…GIEYKPVSAT (197 aa)) are 3 X 57 AA approximate repeats. N6-acetyllysine is present on Lys788. A disordered region spans residues 795–819 (TGQEYKPGNPSAAAVQTVSTKSSSN). The span at 808–819 (AVQTVSTKSSSN) shows a compositional bias: polar residues. The WHEP-TRS 2 domain maps to 822–878 (ESTSLYNKVAAQGEVVRKLKAEKAPKAKVTEAVECLLSLKAEYKEKTGKDYVPGQPP). At Lys861 the chain carries N6-acetyllysine. 2 disordered regions span residues 869–898 (GKDYVPGQPPASQNSHSNPVSNAQPAGAEK) and 956–1011 (TGAE…PKKQ). Tyr872 carries the post-translational modification Phosphotyrosine. Over residues 878–892 (PASQNSHSNPVSNAQ) the composition is skewed to polar residues. Ser885 bears the Phosphoserine mark. The region spanning 900–956 (EAKVLFDRVACQGEVVRKLKAEKASKDQVDSAVQELLQLKAQYKSLTGIEYKPVSAT) is the WHEP-TRS 3 domain. The span at 958–976 (AEDKDKKKKEKENKSEKQN) shows a compositional bias: basic and acidic residues. Over residues 997-1006 (LSSGGAGEGQ) the composition is skewed to gly residues. Ser998 carries the post-translational modification Phosphoserine. The residue at position 999 (Ser999) is a Phosphoserine; by RPS6KB1. The interval 1007 to 1512 (GPKKQTRLGL…KFYTLFGRSY (506 aa)) is proline--tRNA ligase. Residues 1121–1123 (TSE) and Arg1152 contribute to the L-proline site. ATP is bound by residues Arg1152, Glu1154, Arg1163, Thr1164, Gln1237, and Thr1240. Omega-N-methylarginine is present on Arg1152. Gln1237 contacts Mg(2+). His1242 provides a ligand contact to L-proline. ATP contacts are provided by Thr1276 and Arg1278. Residue Ser1350 is modified to Phosphoserine. Positions 1448, 1453, 1495, and 1497 each coordinate Zn(2+). Lys1503 carries the post-translational modification N6-acetyllysine.

It in the N-terminal section; belongs to the class-I aminoacyl-tRNA synthetase family. Glutamate--tRNA ligase type 2 subfamily. This sequence in the C-terminal section; belongs to the class-II aminoacyl-tRNA synthetase family. In terms of assembly, homodimer. Part of the aminoacyl-tRNA synthetase multienzyme complex, also know as multisynthetase complex, that is composed of the tRNA ligases for Arg (RARS1), Asp (DARS1), Gln (QARS1), Ile (IARS1), Leu (LARS1), Lys (KARS1), Met (MARS1) the bifunctional ligase for Glu and Pro (EPRS1) and the auxiliary subunits AIMP1/p43, AIMP2/p38 and EEF1E1/p18. Forms a linear complex that contains MARS1, EEF1E1, EPRS1 and AIMP2 that is at the core of the multisubunit complex. Interacts with TARS3. Interacts with DUS2L. Component of the GAIT complex which is composed of EPRS1, RPL13A and GAPDH. Interacts (phosphorylated at Ser-999) with SLC27A1; mediates the translocation of SLC27A1 from the cytoplasm to the plasma membrane thereby increasing the uptake of long-chain fatty acids. Post-translationally, phosphorylated at Ser-999 by RPS6KB1; triggers EPRS1 release from the aminoacyl-tRNA synthetase multienzyme complex. In monocytes, the IFN-gamma-induced phosphorylation at Ser-999 releases EPRS1 from the aminoacyl-tRNA synthetase multienzyme complex, allowing its association with the GAIT complex. Phosphorylation at Ser-999 is specifically required for the RPL13A-mediated interaction of the GAIT complex with eIF4G. Phosphorylation at Ser-999 by RPS6KB1, is also induced by insulin through activation of the mTORC1 signaling pathway and promotes the interaction of EPRS1 with SLC27A1.

The protein resides in the cytoplasm. The protein localises to the cytosol. Its subcellular location is the membrane. The enzyme catalyses tRNA(Glu) + L-glutamate + ATP = L-glutamyl-tRNA(Glu) + AMP + diphosphate. The catalysed reaction is tRNA(Pro) + L-proline + ATP = L-prolyl-tRNA(Pro) + AMP + diphosphate. Multifunctional protein which primarily functions within the aminoacyl-tRNA synthetase multienzyme complex, also known as multisynthetase complex. Within the complex it catalyzes the attachment of both L-glutamate and L-proline to their cognate tRNAs in a two-step reaction where the amino acid is first activated by ATP to form a covalent intermediate with AMP. Subsequently, the activated amino acid is transferred to the acceptor end of the cognate tRNA to form L-glutamyl-tRNA(Glu) and L-prolyl-tRNA(Pro). Upon interferon-gamma stimulation, EPRS1 undergoes phosphorylation, causing its dissociation from the aminoacyl-tRNA synthetase multienzyme complex. It is recruited to form the GAIT complex, which binds to stem loop-containing GAIT elements found in the 3'-UTR of various inflammatory mRNAs, such as ceruloplasmin. The GAIT complex inhibits the translation of these mRNAs, allowing interferon-gamma to redirect the function of EPRS1 from protein synthesis to translation inhibition in specific cell contexts. Furthermore, it can function as a downstream effector in the mTORC1 signaling pathway, by promoting the translocation of SLC27A1 from the cytoplasm to the plasma membrane where it mediates the uptake of long-chain fatty acid by adipocytes. Thereby, EPRS1 also plays a role in fat metabolism and more indirectly influences lifespan. This Mus musculus (Mouse) protein is Bifunctional glutamate/proline--tRNA ligase.